The chain runs to 261 residues: MPNLLEKTRKITSILQRSVDSLDAELPYNTMAAQLADIIDCNACIINGGGNLLGYAMKYKTNTNRVEEFFETKQFPDYYVKSASRVYDTEANLSVDNDLSIFPVETKENFQDGITTIAPIYGGGMRLGTFIIWRNDKEFSDDDLILVEIASTVVGIQLLNLQTENLEENIRKQTAVTMAINTLSYSEMKAVAAILGELDGLEGRLTASVIADRIGITRSVIVNALRKLESAGIIESRSLGMKGTYLKVINEGIFDKLKEYN.

A GAF domain region spans residues 1–159; it reads MPNLLEKTRK…ASTVVGIQLL (159 aa). The H-T-H motif DNA-binding region spans 207 to 226; that stretch reads ASVIADRIGITRSVIVNALR.

It belongs to the CodY family.

The protein resides in the cytoplasm. Its function is as follows. DNA-binding global transcriptional regulator which is involved in the adaptive response to starvation and acts by directly or indirectly controlling the expression of numerous genes in response to nutrient availability. During rapid exponential growth, CodY is highly active and represses genes whose products allow adaptation to nutrient depletion. The polypeptide is Global transcriptional regulator CodY (Streptococcus agalactiae serotype Ia (strain ATCC 27591 / A909 / CDC SS700)).